A 1012-amino-acid chain; its full sequence is MTNLSDQTQQIVPFIRSLLMPTTGPASIPDDTLEKHTLRSETSTYNLTVGDTGSGLIVFFPGFPGSIVGAHYTLQGNGNYKFDQMLLTAQNLPASYNYCRLVSRSLTVRSSTLPGGVYALNGTINAVTFQGSLSELTDVSYNGLMSATANINDKIGNVLVGEGVTVLSLPTSYDLGYVRLGDPIPAIGLDPKMVATCDSSDRPRVYTITAADDYQFSSQYQPGGVTITLFSANIDAITSLSVGGELVFRTSVHGLVLGATIYLIGFDGTTVITRAVAANNGLTTGTDNLMPFNLVIPTNEITQPITSIKLEIVTSKSGGQAGDQMSWSARGSLAVTIHGGNYPGALRPVTLVAYERVATGSVVTVAGVSNFELIPNPELAKNLVTEYGRFDPGAMNYTKLILSERDRLGIKTVWPTREYTDFREYFMEVADLNSPLKIAGAFGFKDIIRAIRRIAVPVVSTLFPPAAPLAHAIGEGVDYLLGDEAQAASGTARAASGKARAASGRIRQLTLAADKGYEVVANLFQVPQNPVVDGILASPGVLRGAHNLDCVLREGATLFPVVITTVEDAMTPKALNSKMFAVIEGVREDLQPPSQRGSFIRTLSGHRVYGYAPDGVLPLETGRDYTVVPIDDVWDDSIMLSKDPIPPIVGNSGNLAIAYMDVFRPKVPIHVAMTGALNACGEIEKVSFRSTKLATAHRLGLRLAGPGAFDVNTGPNWATFIKRFPHNPRDWDRLPYLNLPYLPPNAGRQYHLAMAASEFKETPELESAVRAMEAAANVDPLFQSALSVFMWLEENGIVTDMANFALSDPNAHRMRNFLANAPQAGSKSQRAKYGTAGYGVEARGPTPEEAQREKDTRISKKMETMGIYFATPEWVALNGHRGPSPGQVKYWQNKREIPDPNEDYLDYVHAEKSRLASEEQILRAATSIYGAPGQAEPPQAFIDEVAKVYEINHGRGPNQEQMKDLLLTAMEMKHRNPRRALPKPKPKPNAPTQRPPGRLGRWIRTVSDEDLE.

Residue Asp30 participates in a divalent metal cation binding. Positions 513 to 755 (ADKGYEVVAN…AGRQYHLAMA (243 aa)) constitute a Peptidase S50 domain. Ser652 (nucleophile) is an active-site residue. Lys692 is an active-site residue. Positions 970 to 1012 (MEMKHRNPRRALPKPKPKPNAPTQRPPGRLGRWIRTVSDEDLE) are disordered. Over residues 975–986 (RNPRRALPKPKP) the composition is skewed to basic residues. An interaction with VP1 protein region spans residues 1003–1012 (IRTVSDEDLE).

In terms of assembly, homotrimer. A central divalent metal stabilizes the VP2 trimer. Interacts with host ITGA4/ITGB1. Homodimer. Interacts (via C-terminus) with VP1 in the cytoplasm. Interacts with VP2. Post-translationally, specific enzymatic cleavages yield mature proteins. The capsid assembly seems to be regulated by polyprotein processing. The protease VP4 cleaves itself off the polyprotein, thus releasing pre-VP2 and VP3 within the infected cell. During capsid assembly, the C-terminus of pre-VP2 is further processed by VP4, giving rise to VP2, the external capsid protein and three small peptides that all stay closely associated with the capsid.

The protein localises to the virion. The protein resides in the host cytoplasm. Functionally, capsid protein VP2 self assembles to form an icosahedral capsid with a T=13 symmetry, about 70 nm in diameter, and consisting of 260 VP2 trimers. The capsid encapsulates the genomic dsRNA. VP2 is also involved in attachment and entry into the host cell by interacting with host ITGA4/ITGB1. In terms of biological role, the precursor of VP2 plays an important role in capsid assembly. First, pre-VP2 and VP2 oligomers assemble to form a procapsid. Then, the pre-VP2 intermediates may be processed into VP2 proteins by proteolytic cleavage mediated by VP4 to obtain the mature virion. The final capsid is composed of pentamers and hexamers but VP2 has a natural tendency to assemble into all-pentameric structures. Therefore pre-VP2 may be required to allow formation of the hexameric structures. Its function is as follows. Protease VP4 is a serine protease that cleaves the polyprotein into its final products. Pre-VP2 is first partially cleaved, and may be completely processed by VP4 upon capsid maturation. Capsid protein VP3 plays a key role in virion assembly by providing a scaffold for the capsid made of VP2. May self-assemble to form a T=4-like icosahedral inner-capsid composed of at least 180 trimers. Plays a role in genomic RNA packaging by recruiting VP1 into the capsid and interacting with the dsRNA genome segments to form a ribonucleoprotein complex. Additionally, the interaction of the VP3 C-terminal tail with VP1 removes the inherent structural blockade of the polymerase active site. Thus, VP3 can also function as a transcriptional activator. Functionally, structural peptide 1 is a small peptide derived from pre-VP2 C-terminus. It destabilizes and perforates cell membranes, suggesting a role during entry. In terms of biological role, structural peptide 2 is a small peptide derived from pVP2 C-terminus. It is not essential for the virus viability, but viral growth is affected when missing. Its function is as follows. Structural peptide 3 is a small peptide derived from pVP2 C-terminus. It is not essential for the virus viability, but viral growth is affected when missing. Structural peptide 4 is a small peptide derived from pVP2 C-terminus. It is essential for the virus viability. This chain is Structural polyprotein, found in Avian infectious bursal disease virus (strain Chicken/Cuba/Soroa/1998) (IBDV).